We begin with the raw amino-acid sequence, 656 residues long: Probable serine/threonine-protein kinase sky1 (656 aa).

The segment at 1-127 is disordered; that stretch reads MSDIQQDSTS…KQGGYHPVRR (127 aa). Positions 16-48 are enriched in gly residues; it reads TSLGGTSLGGTSLGGTSLGGTSLGGTSLGGTSL. Composition is skewed to low complexity over residues 49–64 and 72–89; these read GGSTTTSTTTPKSTNS and TSSNNNNNNNNNNNNNNE. Over residues 96 to 108 the composition is skewed to polar residues; it reads AGSSNKSFMPLNN. Residues 135–648 enclose the Protein kinase domain; it reads YQVVDKLGWG…AKDCLNHTWL (514 aa). 141-149 is an ATP binding site; it reads LGWGHFSTV. Residues 157–185 are disordered; sequence TPITTSSSSSSTTTTTTSSSSNGNGNGNG. A compositionally biased stretch (low complexity) spans 160–179; sequence TTSSSSSSTTTTTTSSSSNG. Residue lysine 197 participates in ATP binding. Residue aspartate 298 is the Proton acceptor of the active site. Positions 330–454 are disordered; that stretch reads RTSSSNKQSQ…TTATATATTT (125 aa). Residues 332–355 show a composition bias toward low complexity; the sequence is SSSNKQSQQQQQPQQQQSQQNIND. Composition is skewed to basic and acidic residues over residues 383 to 401 and 413 to 440; these read SNRDRDNNKNKNIKKDDNK and ENTDNKDLNSSEENKKEEEQQQNKKEEP. Residues 441–454 show a composition bias toward low complexity; that stretch reads TTTTTTATATATTT.

The protein belongs to the protein kinase superfamily. CMGC Ser/Thr protein kinase family.

It catalyses the reaction L-seryl-[protein] + ATP = O-phospho-L-seryl-[protein] + ADP + H(+). The catalysed reaction is L-threonyl-[protein] + ATP = O-phospho-L-threonyl-[protein] + ADP + H(+). The chain is Probable serine/threonine-protein kinase sky1 (sky1) from Dictyostelium discoideum (Social amoeba).